Reading from the N-terminus, the 352-residue chain is MSLNYFDIMVLDCLCKINGERSGSAVFHLFKGKRSSQTIQDAGLFQTAKYFGMAAKCSRSDISASLDKLEKHSYLAPMSESDTYKVTASGAAVLRHALSERPWPVHCHGAHYQQAAGVLWKRLSLLVQVLSHKQQGSRQYIPVTKDHKTLHWVKKYLSRHTDHIEMAKSLFAMLEAHLKKIENKAAQIFVYSLTSHHRIGYTSRQLADTLKEDEWYVYIMFWASVHYFIHSLPECEDALLKDLLSDVHLDNALTESTRKTWQMVKQGFPIQRIAEIRKLKTATIEDHIVEISLHEPAFMINDYVSAEDQLQIAEFAKRMRTNKIKQIRDGLEQRFSYFQIRLALTKQVQQYD.

As to quaternary structure, interacts with RecS and SSB (ssbA); the 6 C-terminal residues of SSB are required for interaction with YpbB.

It is found in the cytoplasm. The protein localises to the nucleoid. The polypeptide is Protein YpbB (ypbB) (Bacillus subtilis (strain 168)).